Here is a 432-residue protein sequence, read N- to C-terminus: Glutamyl-tRNA reductase (432 aa).

Substrate contacts are provided by residues 55 to 58, Ser114, 119 to 121, and Gln125; these read TCNR and ETQ. Residue Cys56 is the Nucleophile of the active site. Residue 194-199 participates in NADP(+) binding; that stretch reads GAGEMI.

It belongs to the glutamyl-tRNA reductase family. In terms of assembly, homodimer.

It catalyses the reaction (S)-4-amino-5-oxopentanoate + tRNA(Glu) + NADP(+) = L-glutamyl-tRNA(Glu) + NADPH + H(+). It participates in porphyrin-containing compound metabolism; protoporphyrin-IX biosynthesis; 5-aminolevulinate from L-glutamyl-tRNA(Glu): step 1/2. Its function is as follows. Catalyzes the NADPH-dependent reduction of glutamyl-tRNA(Glu) to glutamate 1-semialdehyde (GSA). The protein is Glutamyl-tRNA reductase of Burkholderia multivorans (strain ATCC 17616 / 249).